The chain runs to 90 residues: Antitoxin VapB35 (90 aa).

Residues 53 to 90 are disordered; the sequence is GSVQPARVHGPAPRPTIPMRGGLDSGTLLERMRAEERY.

Belongs to the phD/YefM antitoxin family.

Antitoxin component of a type II toxin-antitoxin (TA) system. Neutralizes the effect of cognate toxin VapC35. The chain is Antitoxin VapB35 (vapB35) from Mycobacterium tuberculosis (strain CDC 1551 / Oshkosh).